The sequence spans 473 residues: ATP synthase subunit beta, chloroplastic (473 aa).

172-179 contributes to the ATP binding site; that stretch reads GGAGVGKT.

The protein belongs to the ATPase alpha/beta chains family. In terms of assembly, F-type ATPases have 2 components, CF(1) - the catalytic core - and CF(0) - the membrane proton channel. CF(1) has five subunits: alpha(3), beta(3), gamma(1), delta(1), epsilon(1). CF(0) has four main subunits: a(1), b(1), b'(1) and c(9-12).

The protein localises to the plastid. The protein resides in the chloroplast thylakoid membrane. The catalysed reaction is ATP + H2O + 4 H(+)(in) = ADP + phosphate + 5 H(+)(out). Its function is as follows. Produces ATP from ADP in the presence of a proton gradient across the membrane. The catalytic sites are hosted primarily by the beta subunits. This is ATP synthase subunit beta, chloroplastic from Equisetum arvense (Field horsetail).